A 142-amino-acid chain; its full sequence is Transcriptional regulator MraZ (142 aa).

2 consecutive SpoVT-AbrB domains span residues S5–E51 and A77–S120.

Belongs to the MraZ family. In terms of assembly, forms oligomers.

The protein localises to the cytoplasm. Its subcellular location is the nucleoid. This Bordetella bronchiseptica (strain ATCC BAA-588 / NCTC 13252 / RB50) (Alcaligenes bronchisepticus) protein is Transcriptional regulator MraZ.